Consider the following 249-residue polypeptide: Myelin protein P0 (249 aa).

Positions Met-1–Ala-29 are cleaved as a signal peptide. An Ig-like V-type domain is found at Ile-30–Thr-143. The Extracellular segment spans residues Ile-30–Arg-153. Cys-50 and Cys-127 are oxidised to a cystine. N-linked (GlcNAc...) asparagine glycosylation occurs at Asn-122. Residues Tyr-154 to Val-179 traverse the membrane as a helical segment. Residues Arg-180–Lys-249 lie on the Cytoplasmic side of the membrane. A disordered region spans residues Arg-227–Lys-249.

The protein belongs to the myelin P0 protein family. Found only in peripheral nervous system Schwann cells.

It localises to the cell membrane. Functionally, is an adhesion molecule necessary for normal myelination in the peripheral nervous system. It mediates adhesion between adjacent myelin wraps and ultimately drives myelin compaction. The protein is Myelin protein P0 (MPZ) of Gallus gallus (Chicken).